The primary structure comprises 648 residues: Bifunctional protein TilS/HprT (648 aa).

An ATP-binding site is contributed by 29-34; sequence SGGPDS. Aspartate 627 contributes to the Mg(2+) binding site.

It in the N-terminal section; belongs to the tRNA(Ile)-lysidine synthase family. In the C-terminal section; belongs to the purine/pyrimidine phosphoribosyltransferase family. The cofactor is Mg(2+).

It is found in the cytoplasm. The enzyme catalyses IMP + diphosphate = hypoxanthine + 5-phospho-alpha-D-ribose 1-diphosphate. The catalysed reaction is GMP + diphosphate = guanine + 5-phospho-alpha-D-ribose 1-diphosphate. It catalyses the reaction cytidine(34) in tRNA(Ile2) + L-lysine + ATP = lysidine(34) in tRNA(Ile2) + AMP + diphosphate + H(+). Its function is as follows. Ligates lysine onto the cytidine present at position 34 of the AUA codon-specific tRNA(Ile) that contains the anticodon CAU, in an ATP-dependent manner. Cytidine is converted to lysidine, thus changing the amino acid specificity of the tRNA from methionine to isoleucine. The chain is Bifunctional protein TilS/HprT (tilS/hprT) from Listeria innocua serovar 6a (strain ATCC BAA-680 / CLIP 11262).